A 1085-amino-acid polypeptide reads, in one-letter code: Error-prone DNA polymerase 2 (1085 aa).

The interval 1040–1066 is disordered; sequence AGRGDEFAHGGGGPDSRDRQKPVVPRD.

It belongs to the DNA polymerase type-C family. DnaE2 subfamily.

The protein resides in the cytoplasm. The catalysed reaction is DNA(n) + a 2'-deoxyribonucleoside 5'-triphosphate = DNA(n+1) + diphosphate. DNA polymerase involved in damage-induced mutagenesis and translesion synthesis (TLS). It is not the major replicative DNA polymerase. The polypeptide is Error-prone DNA polymerase 2 (Agrobacterium fabrum (strain C58 / ATCC 33970) (Agrobacterium tumefaciens (strain C58))).